Consider the following 105-residue polypeptide: Iron-sulfur cluster assembly protein CyaY (105 aa).

This sequence belongs to the frataxin family.

Involved in iron-sulfur (Fe-S) cluster assembly. May act as a regulator of Fe-S biogenesis. The polypeptide is Iron-sulfur cluster assembly protein CyaY (Photobacterium profundum (strain SS9)).